The chain runs to 101 residues: Citrate lyase acyl carrier protein (101 aa).

The residue at position 14 (serine 14) is an O-(phosphoribosyl dephospho-coenzyme A)serine.

It belongs to the CitD family. As to quaternary structure, oligomer with a subunit composition of (alpha,beta,gamma)6.

Its subcellular location is the cytoplasm. Functionally, covalent carrier of the coenzyme of citrate lyase. The protein is Citrate lyase acyl carrier protein of Latilactobacillus sakei subsp. sakei (strain 23K) (Lactobacillus sakei subsp. sakei).